Reading from the N-terminus, the 357-residue chain is Vomeronasal type-1 receptor 5 (357 aa).

Residues 1–3 lie on the Extracellular side of the membrane; the sequence is MLK. A helical transmembrane segment spans residues 4 to 24; the sequence is LVIIENMAEIMLFSLDLLLFS. At 25–52 the chain is on the cytoplasmic side; it reads TDILCFNFPSKMIKLPGFITIQIFFYPQ. The chain crosses the membrane as a helical span at residues 53-73; sequence ASFGISANTILFLFHIFTFVF. At 74–81 the chain is on the extracellular side; that stretch reads SHRSKSID. A helical membrane pass occupies residues 82 to 102; sequence MIISHLSLIHILLLFTQAILV. Residues 103–130 are Cytoplasmic-facing; that stretch reads SLDFFGSQNTQDDLRCKVIVFLNKVMRG. Residues 131–151 form a helical membrane-spanning segment; that stretch reads LSICTPCLLNVLQAIISPSIF. Residues 152-163 are Extracellular-facing; sequence SLAKLKHPSASH. The helical transmembrane segment at 164 to 184 threads the bilayer; it reads ILGFFLFSWVLNMFIGVIFCC. Residues 185–269 lie on the Cytoplasmic side of the membrane; it reads TLWLPPVKWG…PVSPVKRASQ (85 aa). A helical transmembrane segment spans residues 270–290; it reads TILLLVSFVFIYWVDFMFSFS. Over 291 to 300 the chain is Extracellular; it reads RGVTWINDSL. N-linked (GlcNAc...) asparagine glycosylation is present at N297. Residues 301–321 traverse the membrane as a helical segment; that stretch reads LVWFQVIVANSYATISPLMLI. Residues 322–357 are Cytoplasmic-facing; sequence YADNQIFKTLQMLWFKYLSPPKLMLKFNRQCGSTKK.

Belongs to the G-protein coupled receptor 1 family.

The protein resides in the cell membrane. Its function is as follows. Putative pheromone receptor. The sequence is that of Vomeronasal type-1 receptor 5 (VN1R5) from Gorilla gorilla gorilla (Western lowland gorilla).